We begin with the raw amino-acid sequence, 265 residues long: Capsule polysaccharide export inner-membrane protein CtrC (265 aa).

A run of 6 helical transmembrane segments spans residues 37 to 57, 64 to 84, 121 to 141, 147 to 167, 178 to 198, and 236 to 256; these read IGFL…VLMW, NVSA…MMMW, IAGA…IGWI, IFYM…LGLV, FGKV…VFFF, and NPWY…AVVA. Residues 37 to 258 form the ABC transmembrane type-2 domain; the sequence is IGFLWLFVEP…LLGLAVVARF (222 aa).

Belongs to the ABC-2 integral membrane protein family.

It is found in the cell inner membrane. Its function is as follows. May form an ATP-driven capsule polysaccharide export apparatus, in association with the CtrB and CtrD proteins. This is Capsule polysaccharide export inner-membrane protein CtrC (ctrC) from Neisseria meningitidis serogroup A / serotype 4A (strain DSM 15465 / Z2491).